The following is a 245-amino-acid chain: NAD(P)H-quinone oxidoreductase subunit K (245 aa).

The [4Fe-4S] cluster site is built by cysteine 58, cysteine 59, cysteine 123, and cysteine 154. The segment at 210–245 (SDTRSAPPKELAEAIGMPIPPALLTEKAQKEEQTRG) is disordered. The span at 236–245 (KAQKEEQTRG) shows a compositional bias: basic and acidic residues.

It belongs to the complex I 20 kDa subunit family. NDH-1 can be composed of about 15 different subunits; different subcomplexes with different compositions have been identified which probably have different functions. It depends on [4Fe-4S] cluster as a cofactor.

It localises to the cellular thylakoid membrane. It carries out the reaction a plastoquinone + NADH + (n+1) H(+)(in) = a plastoquinol + NAD(+) + n H(+)(out). It catalyses the reaction a plastoquinone + NADPH + (n+1) H(+)(in) = a plastoquinol + NADP(+) + n H(+)(out). In terms of biological role, NDH-1 shuttles electrons from an unknown electron donor, via FMN and iron-sulfur (Fe-S) centers, to quinones in the respiratory and/or the photosynthetic chain. The immediate electron acceptor for the enzyme in this species is believed to be plastoquinone. Couples the redox reaction to proton translocation, and thus conserves the redox energy in a proton gradient. Cyanobacterial NDH-1 also plays a role in inorganic carbon-concentration. This is NAD(P)H-quinone oxidoreductase subunit K from Nostoc punctiforme (strain ATCC 29133 / PCC 73102).